The sequence spans 244 residues: Adenosylcobinamide-GDP ribazoletransferase (244 aa).

5 helical membrane-spanning segments follow: residues 33–53 (WFAV…WLGA), 57–77 (PWLA…GLHL), 109–129 (FAVI…MLAV), 132–152 (GVGW…AVWW), and 176–196 (FWLS…VLLL).

This sequence belongs to the CobS family. The cofactor is Mg(2+).

Its subcellular location is the cell inner membrane. The catalysed reaction is alpha-ribazole + adenosylcob(III)inamide-GDP = adenosylcob(III)alamin + GMP + H(+). The enzyme catalyses alpha-ribazole 5'-phosphate + adenosylcob(III)inamide-GDP = adenosylcob(III)alamin 5'-phosphate + GMP + H(+). Its pathway is cofactor biosynthesis; adenosylcobalamin biosynthesis; adenosylcobalamin from cob(II)yrinate a,c-diamide: step 7/7. Joins adenosylcobinamide-GDP and alpha-ribazole to generate adenosylcobalamin (Ado-cobalamin). Also synthesizes adenosylcobalamin 5'-phosphate from adenosylcobinamide-GDP and alpha-ribazole 5'-phosphate. The protein is Adenosylcobinamide-GDP ribazoletransferase of Laribacter hongkongensis (strain HLHK9).